The sequence spans 123 residues: S-adenosylmethionine decarboxylase proenzyme 2 (123 aa).

Residue Ser65 is the Schiff-base intermediate with substrate; via pyruvic acid of the active site. A Pyruvic acid (Ser); by autocatalysis modification is found at Ser65. His70 acts as the Proton acceptor; for processing activity in catalysis. Residue Cys85 is the Proton donor; for catalytic activity of the active site.

Belongs to the prokaryotic AdoMetDC family. Type 1 subfamily. Heterotetramer of two alpha and two beta chains arranged as a dimer of alpha/beta heterodimers. The cofactor is pyruvate. Post-translationally, is synthesized initially as an inactive proenzyme. Formation of the active enzyme involves a self-maturation process in which the active site pyruvoyl group is generated from an internal serine residue via an autocatalytic post-translational modification. Two non-identical subunits are generated from the proenzyme in this reaction, and the pyruvate is formed at the N-terminus of the alpha chain, which is derived from the carboxyl end of the proenzyme. The post-translation cleavage follows an unusual pathway, termed non-hydrolytic serinolysis, in which the side chain hydroxyl group of the serine supplies its oxygen atom to form the C-terminus of the beta chain, while the remainder of the serine residue undergoes an oxidative deamination to produce ammonia and the pyruvoyl group blocking the N-terminus of the alpha chain.

The enzyme catalyses S-adenosyl-L-methionine + H(+) = S-adenosyl 3-(methylsulfanyl)propylamine + CO2. The protein operates within amine and polyamine biosynthesis; S-adenosylmethioninamine biosynthesis; S-adenosylmethioninamine from S-adenosyl-L-methionine: step 1/1. Catalyzes the decarboxylation of S-adenosylmethionine to S-adenosylmethioninamine (dcAdoMet), the propylamine donor required for the synthesis of the polyamines spermine and spermidine from the diamine putrescine. This is S-adenosylmethionine decarboxylase proenzyme 2 from Bacillus cereus (strain ATCC 14579 / DSM 31 / CCUG 7414 / JCM 2152 / NBRC 15305 / NCIMB 9373 / NCTC 2599 / NRRL B-3711).